Consider the following 276-residue polypeptide: Putative non-heme chloroperoxidase (276 aa).

In terms of domain architecture, AB hydrolase-1 spans 26-263 (PIVLIHGFPL…GGPHAINWTH (238 aa)). Residues serine 99, aspartate 228, and histidine 257 contribute to the active site.

Belongs to the AB hydrolase superfamily. Bacterial non-heme haloperoxidase / perhydrolase family.

This is Putative non-heme chloroperoxidase from Synechocystis sp. (strain ATCC 27184 / PCC 6803 / Kazusa).